A 367-amino-acid polypeptide reads, in one-letter code: 3-isopropylmalate dehydrogenase (367 aa).

77–90 (GPKYDDLDFSVKPE) is an NAD(+) binding site. Substrate contacts are provided by Arg97, Arg107, Arg135, and Asp224. Mg(2+)-binding residues include Asp224, Asp248, and Asp252. Position 287–299 (287–299 (GSAPDIAGQGKAN)) interacts with NAD(+).

It belongs to the isocitrate and isopropylmalate dehydrogenases family. LeuB type 1 subfamily. Homodimer. Requires Mg(2+) as cofactor. Mn(2+) is required as a cofactor.

The protein localises to the cytoplasm. It catalyses the reaction (2R,3S)-3-isopropylmalate + NAD(+) = 4-methyl-2-oxopentanoate + CO2 + NADH. It participates in amino-acid biosynthesis; L-leucine biosynthesis; L-leucine from 3-methyl-2-oxobutanoate: step 3/4. Its function is as follows. Catalyzes the oxidation of 3-carboxy-2-hydroxy-4-methylpentanoate (3-isopropylmalate) to 3-carboxy-4-methyl-2-oxopentanoate. The product decarboxylates to 4-methyl-2 oxopentanoate. The protein is 3-isopropylmalate dehydrogenase of Ruegeria pomeroyi (strain ATCC 700808 / DSM 15171 / DSS-3) (Silicibacter pomeroyi).